The primary structure comprises 178 residues: Nicotinamide-nucleotide adenylyltransferase (178 aa).

It belongs to the archaeal NMN adenylyltransferase family. In terms of assembly, homohexamer.

The protein localises to the cytoplasm. It catalyses the reaction beta-nicotinamide D-ribonucleotide + ATP + H(+) = diphosphate + NAD(+). It participates in cofactor biosynthesis; NAD(+) biosynthesis; NAD(+) from nicotinamide D-ribonucleotide: step 1/1. This is Nicotinamide-nucleotide adenylyltransferase from Methanothermobacter thermautotrophicus (strain ATCC 29096 / DSM 1053 / JCM 10044 / NBRC 100330 / Delta H) (Methanobacterium thermoautotrophicum).